The following is a 336-amino-acid chain: MGEPQRPLAVSLGDPAGIGPEIIVHAWRMRDSANLAPFAVAGGANVLRSATEALGVPCPIQEIDDIAEANSAFLEALPVIKGLDGAYLPGAPDPIGAKLALKSLEMATRLATAGHASGVVTAPIAKGLLEQVGFTHPGQTEFLAAACGLPEDASVMMLAGPSLRAVPLTVHCPLAEVPGLLSIGLIVERGRIVASALQRDFGIERPRLAVTGLNPHAGEDGKFGNEEQDVIAPAIAELLADGITATGPHPADALFSPHSRAGFDAALCMYHDQALIPVKALDFDQGVNVTLGLPIVRTSPDHGTAFDIAGRGTAHPGAMVFALLMAGECAARRADA.

Substrate is bound at residue Thr140. A divalent metal cation is bound by residues His171, His216, and His271. Residues Lys279, Asn288, and Arg297 each contribute to the substrate site.

It belongs to the PdxA family. Homodimer. It depends on Zn(2+) as a cofactor. Requires Mg(2+) as cofactor. Co(2+) serves as cofactor.

It localises to the cytoplasm. The catalysed reaction is 4-(phosphooxy)-L-threonine + NAD(+) = 3-amino-2-oxopropyl phosphate + CO2 + NADH. Its pathway is cofactor biosynthesis; pyridoxine 5'-phosphate biosynthesis; pyridoxine 5'-phosphate from D-erythrose 4-phosphate: step 4/5. Functionally, catalyzes the NAD(P)-dependent oxidation of 4-(phosphooxy)-L-threonine (HTP) into 2-amino-3-oxo-4-(phosphooxy)butyric acid which spontaneously decarboxylates to form 3-amino-2-oxopropyl phosphate (AHAP). This chain is 4-hydroxythreonine-4-phosphate dehydrogenase, found in Erythrobacter litoralis (strain HTCC2594).